Reading from the N-terminus, the 154-residue chain is D-aminoacyl-tRNA deacylase (154 aa).

A Gly-cisPro motif, important for rejection of L-amino acids motif is present at residues 142 to 143; sequence GP.

This sequence belongs to the DTD family. As to quaternary structure, homodimer.

The protein resides in the cytoplasm. It catalyses the reaction glycyl-tRNA(Ala) + H2O = tRNA(Ala) + glycine + H(+). The enzyme catalyses a D-aminoacyl-tRNA + H2O = a tRNA + a D-alpha-amino acid + H(+). Its function is as follows. An aminoacyl-tRNA editing enzyme that deacylates mischarged D-aminoacyl-tRNAs. Also deacylates mischarged glycyl-tRNA(Ala), protecting cells against glycine mischarging by AlaRS. Acts via tRNA-based rather than protein-based catalysis; rejects L-amino acids rather than detecting D-amino acids in the active site. By recycling D-aminoacyl-tRNA to D-amino acids and free tRNA molecules, this enzyme counteracts the toxicity associated with the formation of D-aminoacyl-tRNA entities in vivo and helps enforce protein L-homochirality. The chain is D-aminoacyl-tRNA deacylase (DTD1) from Yarrowia lipolytica (strain CLIB 122 / E 150) (Yeast).